The primary structure comprises 258 residues: Trans-aconitate 2-methyltransferase (258 aa).

It belongs to the methyltransferase superfamily. Tam family.

The protein localises to the cytoplasm. The catalysed reaction is trans-aconitate + S-adenosyl-L-methionine = (E)-3-(methoxycarbonyl)pent-2-enedioate + S-adenosyl-L-homocysteine. Catalyzes the S-adenosylmethionine monomethyl esterification of trans-aconitate. The chain is Trans-aconitate 2-methyltransferase from Yersinia pseudotuberculosis serotype O:1b (strain IP 31758).